A 65-amino-acid chain; its full sequence is Disintegrin CC5 (65 aa).

The 65-residue stretch at 1-65 (MNSAHPCCDP…SDCPRNRYKS (65 aa)) folds into the Disintegrin domain. 4 cysteine pairs are disulfide-bonded: Cys-7–Cys-30, Cys-21–Cys-27, Cys-26–Cys-51, and Cys-39–Cys-58. The Cell attachment site motif lies at 43–45 (RGD).

This sequence belongs to the disintegrin family. Dimeric disintegrin subfamily. In terms of assembly, homodimer; disulfide-linked. Expressed by the venom gland.

The protein resides in the secreted. Functionally, binds and inhibits integrins alpha-IIb/beta-3 (ITGA2B/ITGB3), alpha-V/beta-3 (ITGAV/ITGB3) and alpha-5/beta-1 (ITGA5/ITGB1). This chain is Disintegrin CC5, found in Cerastes cerastes (Horned desert viper).